The sequence spans 70 residues: Turripeptide Gsg9.2 (70 aa).

Positions 1–20 are cleaved as a signal peptide; the sequence is MKVYCLLLVLLVGLVSQAHG. One can recognise a Kazal-like domain in the interval 21–70; the sequence is QLDKKCQMVCTMDYRPVCGSDGRTYPNKCTLTSTACMSQRSITVFHDGEC. Disulfide bonds link cysteine 26/cysteine 56, cysteine 30/cysteine 49, and cysteine 38/cysteine 70.

It belongs to the conopeptide P-like superfamily. In terms of tissue distribution, expressed by the venom duct.

It localises to the secreted. Acts as a neurotoxin by inhibiting an ion channel. May also act as a serine protease inhibitor, since it possess the kazal serine protease inhibitor signature. The chain is Turripeptide Gsg9.2 from Gemmula sogodensis (Gem-turris).